Consider the following 260-residue polypeptide: Ubiquinone/menaquinone biosynthesis C-methyltransferase UbiE (260 aa).

S-adenosyl-L-methionine contacts are provided by residues Thr-83, Asp-104, 132–133, and Ser-149; that span reads NA.

This sequence belongs to the class I-like SAM-binding methyltransferase superfamily. MenG/UbiE family.

The catalysed reaction is a 2-demethylmenaquinol + S-adenosyl-L-methionine = a menaquinol + S-adenosyl-L-homocysteine + H(+). The enzyme catalyses a 2-methoxy-6-(all-trans-polyprenyl)benzene-1,4-diol + S-adenosyl-L-methionine = a 5-methoxy-2-methyl-3-(all-trans-polyprenyl)benzene-1,4-diol + S-adenosyl-L-homocysteine + H(+). The protein operates within quinol/quinone metabolism; menaquinone biosynthesis; menaquinol from 1,4-dihydroxy-2-naphthoate: step 2/2. Its pathway is cofactor biosynthesis; ubiquinone biosynthesis. In terms of biological role, methyltransferase required for the conversion of demethylmenaquinol (DMKH2) to menaquinol (MKH2) and the conversion of 2-polyprenyl-6-methoxy-1,4-benzoquinol (DDMQH2) to 2-polyprenyl-3-methyl-6-methoxy-1,4-benzoquinol (DMQH2). The protein is Ubiquinone/menaquinone biosynthesis C-methyltransferase UbiE of Vibrio vulnificus (strain CMCP6).